The primary structure comprises 433 residues: MTITVLKSAPGLPPAPQGDAADVVQVMLARLRAEGEAAARDYAARLDGWSGEIVVSPDQVARASEQVPEDLKTQIRYAHDNIRRFAEAQRASALDFQTELRPGLIAGQKQIPLAAAGAYVPGGRYAHIASALMSIATARAAGVGQITAVSPPQVGRGVHPAILYAMSLAGADRILALGGVQGVAALAFGLFGAPPADILVGPGNQFVAEAKRQLFGPVGIDMFAGPTDSLVIADSTADPLTVAWDLVGQAEHGYNSPVWLVTDSAALAEAVLAHIPGCIADLPEPNRSSAQAAWDALGEVILCTDREEMAATADRYAPEHLHVQAADLDWWRGRLSAYGSLFLGELTTVAFGDKASGPNHVLPTSGAARYTGGLSVHKFLKTVTWQQVAPQALPDLARATATISRAEGMEGHARTADIRLEKLRPTLRQVGTG.

Positions 249 and 252 each coordinate Zn(2+). Active-site proton acceptor residues include E319 and H320. Positions 353 and 412 each coordinate Zn(2+).

This sequence belongs to the histidinol dehydrogenase family. The cofactor is Zn(2+).

This chain is Histidinol dehydrogenase homolog, found in Ruegeria pomeroyi (strain ATCC 700808 / DSM 15171 / DSS-3) (Silicibacter pomeroyi).